The primary structure comprises 562 residues: MDLPEGPVGGPTAEMYLRERPEEARLGMPVSLEEQILNSTFEACDPQRTGTVAVAQVLAYLEAVTGQGPQDARLQTLANSLDPNGEGPKATVDLDTFLVVMRDWIAACQLHGGLELEEETAFQGALTSRQLPSGCPEAEEPANLESFGGEDPRPELQATADLLSSLEDLELSNRRLVGENAKLQRSMETAEEGSARLGEEILALRKQLHSTQQALQFAKAMDEELEDLKTLARSLEEQNRSLLAQARQAEKEQQHLVAEMETLQEENGKLLAERDGVKKRSQELAMEKDTLKRQLFECEHLICQRDTILSERTRDVESLAQTLEEYRVTTQELRLEISRLEEQLSQTYEGPDELPEGAQLRRVGWTELLPPSLGLEIEAIRQKQEVATADLSNPLCGVWQWEEVIHETSEETEFPSEAPAGGQRNFQGEPAHPEEGRKEPSMWLTRREEEEDAESQVTADLPVPLGAPRPGDIPENPPERPARRELQQALVPVMKKLVPVRRRAWGQLCLPPQRLRVTRHPLIPAPVLGLLLLLLLSVLLLGPSPPPTWPHLQLCYLQPPPV.

At 1–521 (MDLPEGPVGG…PQRLRVTRHP (521 aa)) the chain is on the cytoplasmic side. The segment at 125–153 (ALTSRQLPSGCPEAEEPANLESFGGEDPR) is disordered. Residues 164-349 (SSLEDLELSN…LEEQLSQTYE (186 aa)) adopt a coiled-coil conformation. The segment at 407–481 (ETSEETEFPS…DIPENPPERP (75 aa)) is disordered. Over residues 431-448 (AHPEEGRKEPSMWLTRRE) the composition is skewed to basic and acidic residues. Residues 522–542 (LIPAPVLGLLLLLLLSVLLLG) form a helical; Anchor for type IV membrane protein membrane-spanning segment. The interval 541 to 562 (LGPSPPPTWPHLQLCYLQPPPV) is interaction with SUN1. Over 543–562 (PSPPPTWPHLQLCYLQPPPV) the chain is Perinuclear space.

Core component the LINC complex which is composed of inner nuclear membrane SUN domain-containing proteins coupled to outer nuclear membrane KASH domain-containing nesprins. SUN and KASH domain-containing proteins seem to bind each other promiscuously; however, differentially expression of LINC complex constituents is giving rise to specific assemblies. At least SUN1/2-containing core LINC complexes are proposed to be hexameric composed of three protomers of each KASH and SUN domain-containing protein. Interacts with SUN1; this interaction mediates its telomere localization by forming a SUN1:KASH5 LINC complex. Component of a probable SUN2:KASH5 LINC complex. Self-associates. Interacts with DYNC1H1, DCTN1, DYNC1I1/2 and PAFAH1B1; suggesting the association with the dynein-dynactin motor complex. In terms of tissue distribution, expressed in testis (at protein level).

It localises to the nucleus outer membrane. The protein localises to the nucleus. The protein resides in the chromosome. Its subcellular location is the telomere. It is found in the nucleus envelope. Its function is as follows. As a component of the LINC (LInker of Nucleoskeleton and Cytoskeleton) complex, involved in the connection between the nuclear lamina and the cytoskeleton. The nucleocytoplasmic interactions established by the LINC complex play an important role in the transmission of mechanical forces across the nuclear envelope and in nuclear movement and positioning. Required for telomere attachment to nuclear envelope in the prophase of meiosis. Required for rapid telomere prophase movements implicating a SUN1/2:KASH5 LINC complex in which SUN1 and SUN2 seem to act at least partial redundantly. Required for homolog pairing during meiotic prophase in spermatocytes and probably oocytes. Essential for male and female gametogenesis. Recruits cytoplasmic dynein to telomere attachment sites at the nuclear envelope in spermatocytes. In oocytes is involved in meiotic resumption and spindle formation. The polypeptide is Protein KASH5 (Homo sapiens (Human)).